The following is a 389-amino-acid chain: 26S proteasome non-ATPase regulatory subunit 6 (389 aa).

The 169-residue stretch at 193–361 (DFKQAAELFL…EIVETNRPDS (169 aa)) folds into the PCI domain.

This sequence belongs to the proteasome subunit S10 family. Component of the 19S proteasome regulatory particle complex. The 26S proteasome consists of a 20S core particle (CP) and two 19S regulatory subunits (RP). The regulatory particle is made of a lid composed of 9 subunits including PSMD6, a base containing 6 ATPases and few additional components.

Its function is as follows. Component of the 26S proteasome, a multiprotein complex involved in the ATP-dependent degradation of ubiquitinated proteins. This complex plays a key role in the maintenance of protein homeostasis by removing misfolded or damaged proteins, which could impair cellular functions, and by removing proteins whose functions are no longer required. Therefore, the proteasome participates in numerous cellular processes, including cell cycle progression, apoptosis, or DNA damage repair. This chain is 26S proteasome non-ATPase regulatory subunit 6 (PSMD6), found in Homo sapiens (Human).